The following is a 446-amino-acid chain: Choline monooxygenase, chloroplastic (446 aa).

A chloroplast-targeting transit peptide spans 1–65 (MAASATTMLL…NTSTNKIITK (65 aa)). One can recognise a Rieske domain in the interval 127-234 (WQVAGYSEQV…VAEWGPFILI (108 aa)). [2Fe-2S] cluster-binding residues include Cys-169, His-171, Cys-188, and His-191. His-294 and His-299 together coordinate Fe cation.

This sequence belongs to the choline monooxygenase family. Requires [2Fe-2S] cluster as cofactor. The cofactor is Fe cation. Mg(2+) serves as cofactor. In terms of tissue distribution, expressed in roots and leaves.

It localises to the plastid. Its subcellular location is the chloroplast stroma. The enzyme catalyses choline + 2 reduced [2Fe-2S]-[ferredoxin] + O2 + 2 H(+) = betaine aldehyde hydrate + 2 oxidized [2Fe-2S]-[ferredoxin] + H2O. The protein operates within amine and polyamine biosynthesis; betaine biosynthesis via choline pathway; betaine aldehyde from choline (monooxygenase route): step 1/1. In terms of biological role, catalyzes the first step of the osmoprotectant glycine betaine synthesis. The chain is Choline monooxygenase, chloroplastic (CMO) from Beta vulgaris (Sugar beet).